A 418-amino-acid chain; its full sequence is Serine hydroxymethyltransferase (418 aa).

(6S)-5,6,7,8-tetrahydrofolate-binding positions include Leu-121 and 125-127 (GHL). At Lys-230 the chain carries N6-(pyridoxal phosphate)lysine. 356–358 (SPF) contacts (6S)-5,6,7,8-tetrahydrofolate.

The protein belongs to the SHMT family. In terms of assembly, homodimer. It depends on pyridoxal 5'-phosphate as a cofactor.

It localises to the cytoplasm. The catalysed reaction is (6R)-5,10-methylene-5,6,7,8-tetrahydrofolate + glycine + H2O = (6S)-5,6,7,8-tetrahydrofolate + L-serine. Its pathway is one-carbon metabolism; tetrahydrofolate interconversion. It functions in the pathway amino-acid biosynthesis; glycine biosynthesis; glycine from L-serine: step 1/1. Functionally, catalyzes the reversible interconversion of serine and glycine with tetrahydrofolate (THF) serving as the one-carbon carrier. This reaction serves as the major source of one-carbon groups required for the biosynthesis of purines, thymidylate, methionine, and other important biomolecules. Also exhibits THF-independent aldolase activity toward beta-hydroxyamino acids, producing glycine and aldehydes, via a retro-aldol mechanism. This Idiomarina loihiensis (strain ATCC BAA-735 / DSM 15497 / L2-TR) protein is Serine hydroxymethyltransferase.